A 1186-amino-acid chain; its full sequence is MDEPPGKPLSCEEKEKLKEKLAFLKREYSKTLARLQRAQRAEKIKHSIKKTVEEQDCLSQQDLSPQLKHSEPKNKICVYDKLHIKTHLDEETGEKTSITLDVGPESFNPGDGPGGLPIQRTDDTQEHFPHRVSDPSGEQKQKLPSRRKKQQKRTFISQERDCVFGTDSLRLSGKRLKEQEEISSKNPARSPVTEIRTHLLSLKSELPDSPEPVTEINEDSVLIPPTAQPEKGVDTFLRRPNFTRATTVPLQTLSDSGSSQHLEHIPPKGSSELTTHDLKNIRFTSPVSLEAQGKKMTVSTDNLLVNKAISKSGQLPTSSNLEANISCSLNELTYNNLPANENQNLKEQNQTEKSLKSPSDTLDGRNENLQESEILSQPKSLSLEATSPLSAEKHSCTVPEGLLFPAEYYVRTTRSMSNCQRKVAVEAVIQSHLDVKKKGFKNKNKDASKNLNLSNEETDQSEIRMSGTCTGQPSSRTSQKLLSLTKVSSPAGPTEDNDLSRKAVAQAPGRRYTGKRKSACTPASDHCEPLLPTSSLSIVNRSKEEVTSHKYQHEKLFIQVKGKKSRHQKEDSLSWSNSAYLSLDDDAFTAPFHRDGMLSLKQLLSFLSITDFQLPDEDFGPLKLEKVKSCSEKPVEPFESKMFGERHLKEGSCIFPEELSPKRMDTEMEDLEEDLIVLPGKSHPKRPNSQSQHTKTGLSSSILLYTPLNTVAPDDNDRPTTDMCSPAFPILGTTPAFGPQGSYEKASTEVAGRTCCTPQLAHLKDSVCLASDTKQFDSSGSPAKPHTTLQVSGRQGQPTCDCDSVPPGTPPPIESFTFKENQLCRNTCQELHKHSVEQTETAELPASDSINPGNLQLVSELKNPSGSCSVDVSAMFWERAGCKEPCIITACEDVVSLWKALDAWQWEKLYTWHFAEVPVLQIVPVPDVYNLVCVALGNLEIREIRALFCSSDDESEKQVLLKSGNIKAVLGLTKRRLVSSSGTLSDQQVEVMTFAEDGGGKENQFLMPPEETILTFAEVQGMQEALLGTTIMNNIVIWNLKTGQLLKKMHIDDSYQASVCHKAYSEMGLLFIVLSHPCAKESESLRSPVFQLIVINPKTTLSVGVMLYCLPPGQAGRFLEGDVKDHCAAAILTSGTIAIWDLLLGQCTALLPPVSDQHWSFVKWSGTDSHLLAGQKDGNIFVYHYS.

The segment at 1 to 160 (MDEPPGKPLS…QKRTFISQER (160 aa)) is required for its oligomerization and is important for its focal concentration at DNA damage sites. An interaction with RAD51 region spans residues 1–200 (MDEPPGKPLS…PVTEIRTHLL (200 aa)). An interaction with BRCA1 region spans residues 1-319 (MDEPPGKPLS…SKSGQLPTSS (319 aa)). A DNA-binding (with the preference D loop &gt; dsDNA &gt; ssDNA) region spans residues 1 to 579 (MDEPPGKPLS…EDSLSWSNSA (579 aa)). Residues 9 to 41 (LSCEEKEKLKEKLAFLKREYSKTLARLQRAQRA) are a coiled coil. Disordered stretches follow at residues 52–72 (VEEQ…HSEP) and 95–157 (KTSI…TFIS). The segment covering 120–141 (RTDDTQEHFPHRVSDPSGEQKQ) has biased composition (basic and acidic residues). A compositionally biased stretch (basic residues) spans 143 to 152 (LPSRRKKQQK). Phosphoserine occurs at positions 172 and 190. The interval 252-273 (TLSDSGSSQHLEHIPPKGSSEL) is disordered. Residue Ser285 is modified to Phosphoserine. Residues 346 to 365 (KEQNQTEKSLKSPSDTLDGR) are disordered. A phosphoserine mark is found at Ser376 and Ser387. Residues 395 to 446 (SCTVPEGLLFPAEYYVRTTRSMSNCQRKVAVEAVIQSHLDVKKKGFKNKNKD) are chAM (Chromatin-association motif); required for chromatin association, mediates nucleosome association. Positions 440–525 (FKNKNKDASK…RKSACTPASD (86 aa)) are disordered. At Ser454 the chain carries Phosphoserine. Polar residues predominate over residues 467-488 (GTCTGQPSSRTSQKLLSLTKVS). At Ser660 the chain carries Phosphoserine. 2 disordered regions span residues 679–698 (PGKS…KTGL) and 774–798 (KQFD…QGQP). The segment covering 687–698 (PNSQSQHTKTGL) has biased composition (polar residues). The segment at 775 to 1186 (QFDSSGSPAK…DGNIFVYHYS (412 aa)) is required for interaction with POLH and POLH DNA synthesis stimulation. At Ser781 the chain carries Phosphoserine. The segment at 853-1186 (GNLQLVSELK…DGNIFVYHYS (334 aa)) is interaction with RAD51, BRCA2 and POLH. 7 WD repeats span residues 854–915 (NLQL…WHFA), 917–961 (VPVL…QVLL), 962–1009 (KSGN…LMPP), 1010–1052 (EETI…MHID), 1058–1109 (SVCH…MLYC), 1115–1153 (AGRF…LLPP), and 1155–1186 (SDQH…YHYS).

As to quaternary structure, homooligomer; dissociated upon DNA damage thus allowing association with BRCA1. Oligomerization is essential for its focal accumulation at DNA breaks. Part of a BRCA complex containing BRCA1, BRCA2 and PALB2. Interacts with BRCA1 and this interaction is essential for its function in HRR. Interacts with RAD51AP1 and MORF4L1/MRG15. Component of the homologous recombination repair (HR) complex composed of ERCC5/XPG, BRCA2, PALB2, DSS1 and RAD51. Within the complex, interacts with ERCC5/XPG and BRCA2. Interacts with BRCA2, RAD51C, RAD51 and XRCC3; the interactions are direct and it may serve as a scaffold for a HR complex containing PALB2, BRCA2, RAD51C, RAD51 and XRCC3. Interacts with POLH; the interaction is direct.

It localises to the nucleus. In terms of biological role, plays a critical role in homologous recombination repair (HRR) through its ability to recruit BRCA2 and RAD51 to DNA breaks. Strongly stimulates the DNA strand-invasion activity of RAD51, stabilizes the nucleoprotein filament against a disruptive BRC3-BRC4 polypeptide and helps RAD51 to overcome the suppressive effect of replication protein A (RPA). Functionally cooperates with RAD51AP1 in promoting of D-loop formation by RAD51. Serves as the molecular scaffold in the formation of the BRCA1-PALB2-BRCA2 complex which is essential for homologous recombination. Via its WD repeats is proposed to scaffold a HR complex containing RAD51C and BRCA2 which is thought to play a role in HR-mediated DNA repair. Essential partner of BRCA2 that promotes the localization and stability of BRCA2. Also enables its recombinational repair and checkpoint functions of BRCA2. May act by promoting stable association of BRCA2 with nuclear structures, allowing BRCA2 to escape the effects of proteasome-mediated degradation. Binds DNA with high affinity for D loop, which comprises single-stranded, double-stranded and branched DNA structures. May play a role in the extension step after strand invasion at replication-dependent DNA double-strand breaks; together with BRCA2 is involved in both POLH localization at collapsed replication forks and DNA polymerization activity. This chain is Partner and localizer of BRCA2 (PALB2), found in Homo sapiens (Human).